Consider the following 91-residue polypeptide: C-C motif chemokine 5 (91 aa).

An N-terminal signal peptide occupies residues 1–23 (MKVSAARLAVILVATALCAPASA). Disulfide bonds link Cys33–Cys57 and Cys34–Cys73.

Belongs to the intercrine beta (chemokine CC) family.

Its subcellular location is the secreted. In terms of biological role, chemoattractant for blood monocytes, memory T-helper cells and eosinophils. Causes the release of histamine from basophils and activates eosinophils. May activate several chemokine receptors including CCR1, CCR3, CCR4 and CCR5. May also be an agonist of the G protein-coupled receptor GPR75. Together with GPR75, may play a role in neuron survival through activation of a downstream signaling pathway involving the PI3, Akt and MAP kinases. By activating GPR75 may also play a role in insulin secretion by islet cells. In Macaca mulatta (Rhesus macaque), this protein is C-C motif chemokine 5 (CCL5).